The primary structure comprises 295 residues: Shikimate dehydrogenase (NADP(+)) (295 aa).

Residues Ser-24 to Ser-26 and Thr-71 contribute to the shikimate site. Lys-75 acts as the Proton acceptor in catalysis. Glu-87 is a binding site for NADP(+). Shikimate is bound by residues Asn-96 and Asp-111. NADP(+)-binding positions include Gly-136–Ala-140, Asn-160–Arg-165, and Met-233. Tyr-235 contributes to the shikimate binding site. Gly-256 contacts NADP(+).

Belongs to the shikimate dehydrogenase family. As to quaternary structure, homodimer.

The catalysed reaction is shikimate + NADP(+) = 3-dehydroshikimate + NADPH + H(+). It functions in the pathway metabolic intermediate biosynthesis; chorismate biosynthesis; chorismate from D-erythrose 4-phosphate and phosphoenolpyruvate: step 4/7. Its function is as follows. Involved in the biosynthesis of the chorismate, which leads to the biosynthesis of aromatic amino acids. Catalyzes the reversible NADPH linked reduction of 3-dehydroshikimate (DHSA) to yield shikimate (SA). This Cupriavidus taiwanensis (strain DSM 17343 / BCRC 17206 / CCUG 44338 / CIP 107171 / LMG 19424 / R1) (Ralstonia taiwanensis (strain LMG 19424)) protein is Shikimate dehydrogenase (NADP(+)).